A 753-amino-acid polypeptide reads, in one-letter code: LIM domain and actin-binding protein 1 (753 aa).

Position 1 is an N-acetylmethionine (Met1). Phosphoserine is present on Ser15. Over residues 46–56 the composition is skewed to basic and acidic residues; the sequence is EEANMERKKNN. 2 disordered regions span residues 46 to 66 and 82 to 186; these read EEAN…HFRR and GAEF…TSGK. At Ser132 the chain carries Phosphoserine. Positions 143–152 are enriched in basic and acidic residues; the sequence is PRSENSHDFK. The short motif at 164 to 166 is the Required for interaction with NPC1L1 element; the sequence is CLG. The segment covering 167–177 has biased composition (basic and acidic residues); the sequence is DSRHEAEKPET. Phosphoserine occurs at positions 225, 230, 242, and 263. Disordered stretches follow at residues 276–326 and 341–379; these read AAVS…VSTT and TCNS…TAKK. Over residues 278-291 the composition is skewed to polar residues; sequence VSKQSSPASYTNEL. Over residues 292 to 305 the composition is skewed to basic and acidic residues; that stretch reads KTSESKTHKWEQKE. Polar residues predominate over residues 342–351; sequence CNSQVKSEAQ. A phosphoserine mark is found at Ser348, Ser360, Ser367, and Ser372. Residues 363-375 are compositionally biased toward polar residues; sequence ARTSSLPESSPSK. The 61-residue stretch at 386–446 folds into the LIM zinc-binding domain; it reads ESCVECQKTV…KPHFNQLFKS (61 aa). Residue Lys437 is modified to N6-succinyllysine. Phosphoserine is present on residues Ser467, Ser485, and Ser488. Disordered stretches follow at residues 467–493, 505–669, and 682–703; these read SDNE…GVED, SMEA…FELE, and EDDN…GWSG. The tract at residues 491-511 is required for interaction with MYO5B; the sequence is VEDAPIAKVGVLAASMEAKAS. 2 stretches are compositionally biased toward basic and acidic residues: residues 512 to 525 and 554 to 565; these read SQRE…ETKK and WPPEDDVCKTEA. A compositionally biased stretch (low complexity) spans 598 to 609; sequence SSIKSPKASSPS. Ser599, Ser602, Ser607, and Ser615 each carry phosphoserine. Basic and acidic residues predominate over residues 630–666; it reads MERKQTENARPSGEKENVGKSRWQGEEVPRSKDRSSF. A phosphoserine mark is found at Ser692, Ser720, and Ser735.

In terms of assembly, interacts with NPC1L1; bridges NPC1L1 with MYO5B. Interacts with MYO5B; bridges MYO5B with NPC1L1. Interacts with PXN; this complex stabilizes actin dynamics. Binds to G-actin and F-actin. Interacts with LUZP1 (via C-terminus); both proteins restrict ciliation and may work together to regulate this process. Binds RAB40B (GTP-bound); interaction influences LIMA1 subcellular localization in lamellipodia during cell migration. Post-translationally, phosphorylation of the C-terminal region by MAPK1/MAPK3 reduces its association with F-actin and contributes to actin filament reorganization and enhances cell motility. Ubiquitinated by the ECS(RAB40B) complex leading to its degradation. Highly expressed in the small intestine, including the duodenum, jejunum, and ileum. Low expression in the liver and very low expressed in the heart, spleen, lung, brain, and pancreas. Isoform Alpha is highly expressed in embryos from day 7-11 and in adult spleen and lung. Isoform Beta expression is highest in adult kidney, testis, lung and liver, intermediate in heart, brain, spleen, skeletal muscle and low in embryos.

It localises to the cytoplasm. The protein localises to the cell junction. The protein resides in the focal adhesion. Its subcellular location is the cytoskeleton. It is found in the stress fiber. It localises to the cell membrane. The protein localises to the cell projection. The protein resides in the ruffle. Its subcellular location is the lamellipodium. Functionally, actin-binding protein involved in actin cytoskeleton regulation and dynamics. Increases the number and size of actin stress fibers and inhibits membrane ruffling. Inhibits actin filament depolymerization. Bundles actin filaments, delays filament nucleation and reduces formation of branched filaments. Acts as a negative regulator of primary cilium formation. Plays a role in cholesterol homeostasis. Influences plasma cholesterol levels through regulation of intestinal cholesterol absorption. May act as a scaffold protein by regulating NPC1L1 transportation, an essential protein for cholesterol absorption, to the plasma membrane by recruiting MYO5B to NPC1L1, and thus facilitates cholesterol uptake. This Mus musculus (Mouse) protein is LIM domain and actin-binding protein 1 (Lima1).